The following is a 715-amino-acid chain: MFDIKRKTIEWGGKTLTLETGRMARQADGAVLATYGETMVLATAVFAKSPKPGQDFFPLTVNYQEKFYAAGKIPGSFPRREGAPSQKETLTSRLIDRPIRPLFVKGFKNEVQVICTVLAHDLENDPDIVAMVAASAALVLSGVPFMGPIAAARVGYVNGEYVLNPTLDEMKESAMDLVVAGTAEAVMMVESEIKELTEEQVLGGVTFAHKGMQPVIDAIIELAEHSAKEPFDFQPDDTDEIAAKVKDLIGGDLRAAYQITGKSERHAAIGAAKEKAMTAFAKSEANPEGYDANKLGGVFKEIEADIVRRSILETGKRIDGRTVDQVRPILGEVGVLPRAHGSALFTRGETQALCVTTLGTGDDEQLIDALEGKYFEKFMLHYNFPPFSVGETGRMGSPGRREVGHGKLAWRALRPMLPSYEEFPYTIRIVSEIFESNGSSSMATVCGSSLALMDAGVPLKKPVSGIAMGLILEKDGFAVLSDILGDEDHLGDMDFKVAGTADGITSLQMDIKIAGITEEIMKKALEQAKGGRDHILAEMNKAMTAPRAELGEFAPKIETIKIPVDKIREVIGSGGKVIREIVEKTGAKIDIGEDGTIKIAAAEQTKIDAAKEWIKSIASEPEVGQIYTGKVVKIVDFGAFVNFFGAKDGLVHVSQISNERVAKVSDVLTEGQQVKVKLLGFDDRGKTRLSMKVVDQETGEDLSKSNEKAEEPADA.

Positions 488 and 494 each coordinate Mg(2+). The 60-residue stretch at 555 to 614 (PKIETIKIPVDKIREVIGSGGKVIREIVEKTGAKIDIGEDGTIKIAAAEQTKIDAAKEWI) folds into the KH domain. An S1 motif domain is found at 624-692 (GQIYTGKVVK…DRGKTRLSMK (69 aa)). Residues 692 to 715 (KVVDQETGEDLSKSNEKAEEPADA) form a disordered region. Positions 701-715 (DLSKSNEKAEEPADA) are enriched in basic and acidic residues.

It belongs to the polyribonucleotide nucleotidyltransferase family. Mg(2+) is required as a cofactor.

It localises to the cytoplasm. The enzyme catalyses RNA(n+1) + phosphate = RNA(n) + a ribonucleoside 5'-diphosphate. Functionally, involved in mRNA degradation. Catalyzes the phosphorolysis of single-stranded polyribonucleotides processively in the 3'- to 5'-direction. This Phenylobacterium zucineum (strain HLK1) protein is Polyribonucleotide nucleotidyltransferase.